Reading from the N-terminus, the 196-residue chain is CASP-like protein 2U1 (196 aa).

The Cytoplasmic segment spans residues 1-11 (MAPMECVRRRN). The chain crosses the membrane as a helical span at residues 12–32 (VGELVLRCAATLVCMLSLMLL). The Extracellular portion of the chain corresponds to 33-58 (VRDQQIAVQEVGVTSVTTQLRYSSST). The chain crosses the membrane as a helical span at residues 59 to 79 (GLVYLVYANGLVALYCFVVVL). The Cytoplasmic segment spans residues 80–95 (TSSFNGGSVMRRNKSG). A helical membrane pass occupies residues 96-116 (AWALFVLDQVLACILLSAASA). Residues 117-148 (ASEIAFLVEKGAKKTIWDSKCIVYGHFCRMLE) are Extracellular-facing. A helical membrane pass occupies residues 149 to 169 (VSIATSFIAVIMLGSICVLSA). At 170–196 (KQLFQQYTHYARIVNMVKLKSTPNSLL) the chain is on the cytoplasmic side.

Belongs to the Casparian strip membrane proteins (CASP) family. As to quaternary structure, homodimer and heterodimers.

Its subcellular location is the cell membrane. The sequence is that of CASP-like protein 2U1 from Pteridium aquilinum subsp. aquilinum (Bracken fern).